The chain runs to 445 residues: Tryptamine benzoyltransferase 1 (445 aa).

Active-site proton acceptor residues include H150 and D382.

The protein belongs to the plant acyltransferase family.

Functionally, hydroxycinnamoyl transferase that catalyzes the transfer of an acyl from benzoyl-CoA to tryptamine, to produce benzoyl tryptamine. Serotonin and tyramine serve as acyl acceptors in vitro. Can use p-coumaroyl-CoA, and to a lesser extent caffeoyl-CoA, as acyl donors. This chain is Tryptamine benzoyltransferase 1, found in Oryza sativa subsp. japonica (Rice).